A 214-amino-acid polypeptide reads, in one-letter code: Immunoglobulin lambda-like polypeptide 5 (214 aa).

Positions 1 to 35 (MRPKTGQVGCETPEELGPGPRQRWPLLLLGLAMVA) are cleaved as a signal peptide. The j region stretch occupies residues 98–109 (VFGTGTKVTVLG). The segment at 110–214 (QPKANPTVTL…EKTVAPTECS (105 aa)) is c region. The Ig-like C1-type domain occupies 115–209 (PTVTLFPPSS…EGSTVEKTVA (95 aa)). The cysteines at positions 136 and 195 are disulfide-linked.

As to expression, contrary to IGLL1, not expressed in pre-B-cells.

Its subcellular location is the secreted. The protein is Immunoglobulin lambda-like polypeptide 5 (IGLL5) of Homo sapiens (Human).